A 117-amino-acid polypeptide reads, in one-letter code: Ribosome-binding factor A (117 aa).

The protein belongs to the RbfA family. In terms of assembly, monomer. Binds 30S ribosomal subunits, but not 50S ribosomal subunits or 70S ribosomes.

Its subcellular location is the cytoplasm. In terms of biological role, one of several proteins that assist in the late maturation steps of the functional core of the 30S ribosomal subunit. Associates with free 30S ribosomal subunits (but not with 30S subunits that are part of 70S ribosomes or polysomes). Required for efficient processing of 16S rRNA. May interact with the 5'-terminal helix region of 16S rRNA. The chain is Ribosome-binding factor A from Leptospira interrogans serogroup Icterohaemorrhagiae serovar Lai (strain 56601).